We begin with the raw amino-acid sequence, 439 residues long: MEMHLLCETMFTCRKNNILPVHLCILLDDVIHKEKVKAIEGIFFQCVFFKEKLVYTEWTKIKFTYVLHDLVISQIFKNACIKEVIHGALILSVPINIDNLHFDTDILILKIIYPHFLHDDIVIKLSEILSGAPRMQKTVEKKQEVEKPFFHIPAKLGDLTKEDPISFNHHGPLEPPSTVRGLKQSANVRHSHPISRPEKANVTFLSDSWYSQNLKCDFISDIQQRHVLVIFWYELSKGIQMQIKNIQIPPENLFSSITNYLDRVNTYLDEIAERTFRCITTNMEIQNRHLPQKFNSHFQIEFNCTHLISGMELARDFWILSLDRNSCVLKAMASHFLHKKKGRSSLSSNEFWADLIDCTTGKTLYGEKVRWQLNSETSLYSTFRKNQNISWELQPNCYALYMSENLKLYWVLPGGFCVSGTFKLKENDEFFFDWQFGMS.

It belongs to the herpesviridae CVC1 protein family. As to quaternary structure, interacts (via C-terminus) with capsid vertex component 2/CVC2.

Its subcellular location is the virion. The protein localises to the host nucleus. Capsid vertex-specific component that plays a role during viral DNA encapsidation, assuring correct genome cleavage and presumably stabilizing capsids that contain full-length viral genomes. The sequence is that of Capsid vertex component 1 from Homo sapiens (Human).